The following is a 1000-amino-acid chain: Isoleucine--tRNA ligase, mitochondrial (1000 aa).

Residues 1 to 27 constitute a mitochondrion transit peptide; that stretch reads MLGAWRAAPRLRLRARFGVASVWARSA. Positions 102 to 112 match the 'HIGH' region motif; the sequence is PYANGDPHVGH. ATP-binding residues include lysine 649 and lysine 652. A 'KMSKS' region motif is present at residues 649–653; sequence KMSKS.

This sequence belongs to the class-I aminoacyl-tRNA synthetase family.

The protein resides in the mitochondrion matrix. The enzyme catalyses tRNA(Ile) + L-isoleucine + ATP = L-isoleucyl-tRNA(Ile) + AMP + diphosphate. Functionally, aminoacyl-tRNA synthetase that catalyzes the specific attachment of isoleucine to its cognate tRNA (tRNA(Ile)). The polypeptide is Isoleucine--tRNA ligase, mitochondrial (IARS2) (Gallus gallus (Chicken)).